The primary structure comprises 769 residues: MDIGKKHVIPKSQYRRKRREFFHNEDREENLNQHQDKQNIDNTTSKKADKQIHKDSIDKHERFKNSLSSHLEQRNRDVNENKAEESKSNQGSKSAYNKDHYLTDDVSKKQNSLDSVDQDTEKSKYYEQNTEATLSTNSTDKVESTDMRKLSSDKNKVGHEEQHVLSKPSEHDKETRIDFESSRTDSDSSMQTEKIKKDSSDGNKSSNLKSEVISDKSNSVPILSESDDEVNNQKPLTLPEEQKLKRQQSQNEQTKTYTYGDSEQNDKSNHENDLSHHTPSISDDKDYVMREDHIVDDNPDNDINTPSLSKIDDDRKLDEKIHVEDKHKQNADSSETVGYQSQSSASHRSTEKRNMAINDHDKLNGQKPNTKTSANNNQKKATSKLNKGRATNNNYSAILKKFWMMYWPKLVILMGIIILIVILNAIFNNVNKNDRMNDNNDADAQKYTTTMKNANNAVKSVVTVENETSKDSSLPKDKASQDEVGSGVVYKKSGDTLYIVTNAHVVGDKENQKITFSNNKSVVGKVLGKDKWSDLAVVKATSSDSSVKEIAIGDSNNLVLGEPILVVGNPLGVDFKGTVTEGIISGLNRNVPIDFDKDNKYDMLMKAFQIDASVNPGNSGGAVVNREGKLIGVVAAKISMPNVENMSFAIPVNEVQKIVKELETKGKIDYPDVGVKMKNIASLNSFERQAVKLLGKVKNGVVVDQVDNNGLADQSGLKKGDVITELDGKLLEDDLRFRQIIFSHKDDLKSITAKIYRDGKEKEINIKLK.

The span at 1 to 20 (MDIGKKHVIPKSQYRRKRRE) shows a compositional bias: basic residues. The segment at 1–388 (MDIGKKHVIP…KKATSKLNKG (388 aa)) is disordered. Composition is skewed to basic and acidic residues over residues 21 to 64 (FFHN…ERFK), 71 to 87 (LEQRNRDVNENKAEESK), and 96 to 108 (YNKDHYLTDDVSK). The span at 126-139 (YEQNTEATLSTNST) shows a compositional bias: polar residues. Residues 140-186 (DKVESTDMRKLSSDKNKVGHEEQHVLSKPSEHDKETRIDFESSRTDS) show a composition bias toward basic and acidic residues. Residues 247–262 (QQSQNEQTKTYTYGDS) show a composition bias toward polar residues. 2 stretches are compositionally biased toward basic and acidic residues: residues 264-296 (QNDKSNHENDLSHHTPSISDDKDYVMREDHIVD) and 310-330 (KIDDDRKLDEKIHVEDKHKQN). Over residues 331–347 (ADSSETVGYQSQSSASH) the composition is skewed to polar residues. Positions 348–364 (RSTEKRNMAINDHDKLN) are enriched in basic and acidic residues. The segment covering 366–388 (QKPNTKTSANNNQKKATSKLNKG) has biased composition (polar residues). The chain crosses the membrane as a helical span at residues 410 to 430 (LVILMGIIILIVILNAIFNNV). Catalysis depends on charge relay system residues H504, D534, and S619. Positions 680-733 (IASLNSFERQAVKLLGKVKNGVVVDQVDNNGLADQSGLKKGDVITELDGKLLED) constitute a PDZ domain.

The protein belongs to the peptidase S1C family.

Its subcellular location is the cell membrane. This chain is Serine protease HtrA-like, found in Staphylococcus aureus (strain MRSA252).